The following is a 321-amino-acid chain: 5,10-methylenetetrahydromethanopterin reductase (321 aa).

It belongs to the mer family.

Its subcellular location is the cytoplasm. The enzyme catalyses 5-methyl-5,6,7,8-tetrahydromethanopterin + oxidized coenzyme F420-(gamma-L-Glu)(n) + H(+) = 5,10-methylenetetrahydromethanopterin + reduced coenzyme F420-(gamma-L-Glu)(n). The protein operates within one-carbon metabolism; methanogenesis from CO(2); methyl-coenzyme M from 5,10-methylene-5,6,7,8-tetrahydromethanopterin: step 1/2. Its function is as follows. Catalyzes the reversible reduction of methylene-H(4)MPT to methyl-H(4)MPT. This chain is 5,10-methylenetetrahydromethanopterin reductase, found in Methanothermobacter thermautotrophicus (strain ATCC 29096 / DSM 1053 / JCM 10044 / NBRC 100330 / Delta H) (Methanobacterium thermoautotrophicum).